The chain runs to 216 residues: Protein Syd (216 aa).

Belongs to the Syd family.

The protein localises to the cell inner membrane. Functionally, interacts with the SecY protein in vivo. May bind preferentially to an uncomplexed state of SecY, thus functioning either as a chelating agent for excess SecY in the cell or as a regulatory factor that negatively controls the translocase function. This chain is Protein Syd, found in Shewanella sp. (strain W3-18-1).